The chain runs to 121 residues: Large ribosomal subunit protein uL18 (121 aa).

Belongs to the universal ribosomal protein uL18 family. Part of the 50S ribosomal subunit; part of the 5S rRNA/L5/L18/L25 subcomplex. Contacts the 5S and 23S rRNAs.

In terms of biological role, this is one of the proteins that bind and probably mediate the attachment of the 5S RNA into the large ribosomal subunit, where it forms part of the central protuberance. The sequence is that of Large ribosomal subunit protein uL18 from Methylibium petroleiphilum (strain ATCC BAA-1232 / LMG 22953 / PM1).